A 591-amino-acid polypeptide reads, in one-letter code: Transcriptional regulator PUL4 (591 aa).

Positions 3–29 form a DNA-binding region, zn(2)-C6 fungal-type; that stretch reads CLECKKRKQKCDGQKPCRRCTKLNVKC.

Its subcellular location is the nucleus. Transcription factor involved in regulation of the PUL gene cluster that mediates the formation of pulcherrimin, a red iron-containing pigment composed of two cyclized and modified leucine molecules that acts as a siderophore, a chelator that binds iron outside the cell for subsequent uptake. This Kluyveromyces lactis (strain ATCC 8585 / CBS 2359 / DSM 70799 / NBRC 1267 / NRRL Y-1140 / WM37) (Yeast) protein is Transcriptional regulator PUL4.